A 110-amino-acid chain; its full sequence is UPF0145 protein BLD_1357 (110 aa).

The protein belongs to the UPF0145 family.

In Bifidobacterium longum (strain DJO10A), this protein is UPF0145 protein BLD_1357.